We begin with the raw amino-acid sequence, 459 residues long: Cysteine--tRNA ligase (459 aa).

C31 provides a ligand contact to Zn(2+). The 'HIGH' region signature appears at 33 to 43 (PTVYDNPHIGN). 3 residues coordinate Zn(2+): C216, H241, and E245. A 'KMSKS' region motif is present at residues 274–278 (KMSKS). K277 is a binding site for ATP.

This sequence belongs to the class-I aminoacyl-tRNA synthetase family. In terms of assembly, monomer. The cofactor is Zn(2+).

It localises to the cytoplasm. The enzyme catalyses tRNA(Cys) + L-cysteine + ATP = L-cysteinyl-tRNA(Cys) + AMP + diphosphate. This is Cysteine--tRNA ligase from Rickettsia felis (strain ATCC VR-1525 / URRWXCal2) (Rickettsia azadi).